Reading from the N-terminus, the 40-residue chain is Ice-structuring protein GS-8 (40 aa).

Residue methionine 1 is modified to Blocked amino end (Met).

Belongs to the type-I AFP family.

Its function is as follows. Antifreeze proteins lower the blood freezing point. This Myoxocephalus aenaeus (Grubby sculpin) protein is Ice-structuring protein GS-8.